The following is a 1322-amino-acid chain: MGVEDYHVIELVGEGSFGRVYKGRRKYTGQTVAMKFIMKQGKTDKDIHSLRQEIEILRKLKHENIIEMLDSFENAREFCVVTEFAQGELFEILEDDKCLPEEQVQAIAKQLVKALDYLHSNRIIHRDMKPQNILIGAGSVVKLCDFGFARAMSTNTVVLRSIKGTPLYMAPELVKEQPYDRTVDLWSLGVILYELYVGQPPFYTNSVYALIRHIVKDPVKYPDEMSTYFESFLKGLLNKEPHSRLTWPALREHPFVKETQEEVEAREIHTAVVDNKAAWMLKGNGGQQRNEKCDSVTLVEDMSATKGLADVQSDMKSAVKVNSPPTEDFVGFPTQEEIKSSGNPTLDKLENTSRTVKGAQVIGENDKALDLVLLSLERFSKSPDSKRDKDVACSVQSLRIISNLVATRAIVSVGLIEKITCALLDFTDALVGMKSPEFNNIIPKSLSVTKNLVGHVEGNNIHSSYIRHWTKVVEIFIQVVRWEEEGTGRIIYEACSCITTMLSRVAQDLKSSTPDSVSKQILEHANMSRIVDHLCLCLASSGSSLTSGSSQMLAAACEACRAIWILIDTSETFFKNDDVNILPLDALQNRLSQHDIGNSEWGPLSEKLVDTVTRAYLRSKHVQVAVGHCLHQRVEAPLVSAIQLLSRCCLHNGILPSMLCGLPSSLPITTVVSGGEDGTVISEIFSILSYATLSSKDQQTGEKDNFEGRLNNLVFHSCLMLATVAQCLKLTGRNSVLLMLTTSPKKHQHRLSAIANHIASDDKIEASLQNHSASAMLALASILALEKGSSAGSSVSELVVSLIPRATKLCYHLRPMPSNEGEVISHSANYAKWHGLLDGCIGLLESRLKWGGPLAVQQLIASGTPLLLINLLAGKLSNASPEDIKKTSNRIGLSPIGVVWTISSICHCLSGGTTFRQVLVKIETMKLITCLLSDAHIKLVKSWGGPGGGKDGVRETINVIIDLLAFPFVALQSQPGSLSATASVNSGFILNIGSPGVRVCMEDRDLLKAIEEDMDKYIIVLLEVGVPSLILRCLDHLELKDLVRPVAFLAKMVGRPRLAVDLVSKGLLDPNRMKKLLNQSSPREVILDILMIISDLSRMDKAFYKYIGEASVLQPLKEYLTHVDPNIRAKACSALGNMCRHNGYFYSALAEHQIIGLLIDRCADPDKRTQKFACFAIGNAAYHNDTLYEELRRSITQLANVLTTAEEDKTKANAAGALSNLVRNSNKLCEDIVSKGALQTLLRLVADCSTLALNPSKKETASESPLKIALFSLAKMCSNHQICRQFVKSSELFPVIARLKQSPEANIAHYASVIVAKVSGES.

The 251-residue stretch at 6–256 (YHVIELVGEG…WPALREHPFV (251 aa)) folds into the Protein kinase domain. ATP contacts are provided by residues 12-20 (VGEGSFGRV) and K35. D127 acts as the Proton acceptor in catalysis. Positions 1000–1322 (CMEDRDLLKA…VIVAKVSGES (323 aa)) are required for the binding to Kinesin-12 members. ARM repeat units lie at residues 1056 to 1098 (PRLA…DLSR), 1101 to 1140 (KAFYKYIGEASVLQPLKEYLTHVDPNIRAKACSALGNMCR), 1143 to 1182 (GYFYSALAEHQIIGLLIDRCADPDKRTQKFACFAIGNAAY), 1183 to 1223 (HNDT…NLVR), 1226 to 1273 (NKLC…LFSL), and 1281 to 1320 (QICRQFVKSSELFPVIARLKQSPEANIAHYASVIVAKVSG).

It belongs to the protein kinase superfamily. Ser/Thr protein kinase family. Interacts with Kinesin-12 members KIN12A/PAKRP1 and KIN12B/PAKRP1L. Interacts with KIN7B/NACK2. As to expression, ubiquitous.

The protein resides in the cytoplasm. It localises to the cytoskeleton. Its subcellular location is the phragmoplast. The catalysed reaction is L-seryl-[protein] + ATP = O-phospho-L-seryl-[protein] + ADP + H(+). It catalyses the reaction L-threonyl-[protein] + ATP = O-phospho-L-threonyl-[protein] + ADP + H(+). In terms of biological role, plays a role in conventional modes of cytokinesis in meristems and during male gametogenesis but also acts in nonconventional modes of cytokinesis (cellularization) during female gametogenesis. Constitutes a signaling module in association with Kinesin-12 members that is required to support phragmoplast expansion and cell-plate growth in plant cells. This is Serine/threonine-protein kinase TIO (TIO) from Arabidopsis thaliana (Mouse-ear cress).